Consider the following 58-residue polypeptide: Large ribosomal subunit protein uL30 (58 aa).

The protein belongs to the universal ribosomal protein uL30 family. In terms of assembly, part of the 50S ribosomal subunit.

This chain is Large ribosomal subunit protein uL30, found in Psychromonas ingrahamii (strain DSM 17664 / CCUG 51855 / 37).